The chain runs to 386 residues: UDP-N-acetylbacillosamine transaminase (386 aa).

Substrate contacts are provided by residues 25–28 (NYIA), Ala-56, and Ser-179. At Lys-184 the chain carries N6-(pyridoxal phosphate)lysine. Residues Asn-227 and 325 to 328 (QIET) contribute to the substrate site.

The protein belongs to the DegT/DnrJ/EryC1 family. Requires pyridoxal 5'-phosphate as cofactor.

The enzyme catalyses UDP-N-acetylbacillosamine + 2-oxoglutarate = UDP-2-acetamido-2,6-dideoxy-alpha-D-xylo-hex-4-ulose + L-glutamate. Its pathway is protein modification; protein glycosylation. Functionally, aminotransferase involved in the bacillosamine biosynthesis pathway by producing UDP-4-amino-4,6-dideoxy-alpha-D-GlcNAc (UDP-2-acetamido-4-amino-2,4,6-trideoxy-alpha-D-glucopyranose), a precursor used in the production of the glycan component 2,4-diacetamido-2,4,6-trideoxy-alpha-D-glucopyranose. Required for host colonization and virulence. Involved in the N-linked protein glycosylation pathway. This chain is UDP-N-acetylbacillosamine transaminase (pglE), found in Campylobacter jejuni subsp. jejuni serotype O:2 (strain ATCC 700819 / NCTC 11168).